We begin with the raw amino-acid sequence, 230 residues long: Flagellar L-ring protein (230 aa).

Residues 1 to 15 (MSRPPLLSSACLAAT) form the signal peptide. Cysteine 16 carries the N-palmitoyl cysteine lipid modification. A lipid anchor (S-diacylglycerol cysteine) is attached at cysteine 16.

The protein belongs to the FlgH family. The basal body constitutes a major portion of the flagellar organelle and consists of four rings (L,P,S, and M) mounted on a central rod.

The protein localises to the cell outer membrane. It is found in the bacterial flagellum basal body. In terms of biological role, assembles around the rod to form the L-ring and probably protects the motor/basal body from shearing forces during rotation. The sequence is that of Flagellar L-ring protein from Xanthomonas oryzae pv. oryzae (strain MAFF 311018).